The chain runs to 1079 residues: DNA ligase 4 (1079 aa).

Residues 1 to 20 (MAVHAPYNHAPPPTQEINGQ) are disordered. ATP-binding residues include Glu-295, Lys-297, Leu-298, Arg-302, Glu-357, Phe-395, Glu-460, Lys-465, Lys-482, and Lys-484. The active-site N6-AMP-lysine intermediate is the Lys-297. Glu-357 contributes to the Mg(2+) binding site. Glu-460 serves as a coordination point for Mg(2+). Residues 699–789 (VETSIFSDMT…TALPFLKEFL (91 aa)) enclose the BRCT 1 domain. Residues 838 to 847 (DGEDKDEIDV) are compositionally biased toward acidic residues. The segment at 838 to 942 (DGEDKDEIDV…SDVGVNGDDY (105 aa)) is disordered. Basic and acidic residues-rich tracts occupy residues 848 to 878 (EESRESKNRRMAREDLKEKESNRTLEQKKLQ) and 900 to 914 (MSLKEESDTDSERSR). The BRCT 2 domain occupies 968–1078 (DEDRIFYHLA…TLLDEDLYKP (111 aa)).

Belongs to the ATP-dependent DNA ligase family. It depends on Mg(2+) as a cofactor.

The protein resides in the nucleus. It catalyses the reaction ATP + (deoxyribonucleotide)n-3'-hydroxyl + 5'-phospho-(deoxyribonucleotide)m = (deoxyribonucleotide)n+m + AMP + diphosphate.. Functionally, DNA ligase involved in DNA non-homologous end joining (NHEJ); required for double-strand break (DSB) repair. This Cryptococcus neoformans var. neoformans serotype D (strain JEC21 / ATCC MYA-565) (Filobasidiella neoformans) protein is DNA ligase 4 (LIG4).